Reading from the N-terminus, the 431-residue chain is tRNA(Ile)-lysidine synthase (431 aa).

19–24 (STGIDS) contacts ATP.

It belongs to the tRNA(Ile)-lysidine synthase family.

The protein localises to the cytoplasm. It catalyses the reaction cytidine(34) in tRNA(Ile2) + L-lysine + ATP = lysidine(34) in tRNA(Ile2) + AMP + diphosphate + H(+). Functionally, ligates lysine onto the cytidine present at position 34 of the AUA codon-specific tRNA(Ile) that contains the anticodon CAU, in an ATP-dependent manner. Cytidine is converted to lysidine, thus changing the amino acid specificity of the tRNA from methionine to isoleucine. This Staphylococcus aureus (strain MW2) protein is tRNA(Ile)-lysidine synthase.